A 445-amino-acid polypeptide reads, in one-letter code: Exodeoxyribonuclease 7 large subunit (445 aa).

The protein belongs to the XseA family. In terms of assembly, heterooligomer composed of large and small subunits.

Its subcellular location is the cytoplasm. It catalyses the reaction Exonucleolytic cleavage in either 5'- to 3'- or 3'- to 5'-direction to yield nucleoside 5'-phosphates.. In terms of biological role, bidirectionally degrades single-stranded DNA into large acid-insoluble oligonucleotides, which are then degraded further into small acid-soluble oligonucleotides. This Xanthomonas oryzae pv. oryzae (strain MAFF 311018) protein is Exodeoxyribonuclease 7 large subunit.